Reading from the N-terminus, the 1052-residue chain is Isoleucine--tRNA ligase (1052 aa).

Residues 58-68 (PFANGLPHYGH) carry the 'HIGH' region motif. The short motif at 627–631 (KMSKS) is the 'KMSKS' region element. Lys-630 is an ATP binding site.

Belongs to the class-I aminoacyl-tRNA synthetase family. IleS type 2 subfamily. Monomer. Requires Zn(2+) as cofactor.

Its subcellular location is the cytoplasm. The catalysed reaction is tRNA(Ile) + L-isoleucine + ATP = L-isoleucyl-tRNA(Ile) + AMP + diphosphate. Catalyzes the attachment of isoleucine to tRNA(Ile). As IleRS can inadvertently accommodate and process structurally similar amino acids such as valine, to avoid such errors it has two additional distinct tRNA(Ile)-dependent editing activities. One activity is designated as 'pretransfer' editing and involves the hydrolysis of activated Val-AMP. The other activity is designated 'posttransfer' editing and involves deacylation of mischarged Val-tRNA(Ile). The sequence is that of Isoleucine--tRNA ligase from Corynebacterium diphtheriae (strain ATCC 700971 / NCTC 13129 / Biotype gravis).